Consider the following 1253-residue polypeptide: Cytoplasmic FMR1-interacting protein 1 homolog (1253 aa).

It belongs to the CYFIP family.

It localises to the cytoplasm. The protein resides in the perinuclear region. The protein localises to the cell projection. Its subcellular location is the lamellipodium. It is found in the ruffle. It localises to the synapse. The protein resides in the synaptosome. In terms of biological role, involved in formation of membrane ruffles and lamellipodia protrusions and in axon outgrowth. Binds to F-actin but not to RNA. This Danio rerio (Zebrafish) protein is Cytoplasmic FMR1-interacting protein 1 homolog.